Here is a 979-residue protein sequence, read N- to C-terminus: DNA ligase 4 (979 aa).

Residues M1–L39 are disordered. The ATP site is built by E320, K322, L323, R327, E389, F430, E490, K495, K512, and K514. The active-site N6-AMP-lysine intermediate is the K322. E389 provides a ligand contact to Mg(2+). E490 provides a ligand contact to Mg(2+). BRCT domains lie at P721–L814 and L867–P965.

Belongs to the ATP-dependent DNA ligase family. Mg(2+) is required as a cofactor.

It localises to the nucleus. It catalyses the reaction ATP + (deoxyribonucleotide)n-3'-hydroxyl + 5'-phospho-(deoxyribonucleotide)m = (deoxyribonucleotide)n+m + AMP + diphosphate.. Functionally, DNA ligase involved in DNA non-homologous end joining (NHEJ); required for double-strand break (DSB) repair. The sequence is that of DNA ligase 4 (lig4) from Aspergillus fumigatus (strain ATCC MYA-4609 / CBS 101355 / FGSC A1100 / Af293) (Neosartorya fumigata).